We begin with the raw amino-acid sequence, 620 residues long: Chaperone protein HscA homolog (620 aa).

This sequence belongs to the heat shock protein 70 family.

Its function is as follows. Chaperone involved in the maturation of iron-sulfur cluster-containing proteins. Has a low intrinsic ATPase activity which is markedly stimulated by HscB. The polypeptide is Chaperone protein HscA homolog (Shewanella baltica (strain OS195)).